The primary structure comprises 586 residues: Proline--tRNA ligase (586 aa).

The protein belongs to the class-II aminoacyl-tRNA synthetase family. ProS type 1 subfamily. As to quaternary structure, homodimer.

It is found in the cytoplasm. It carries out the reaction tRNA(Pro) + L-proline + ATP = L-prolyl-tRNA(Pro) + AMP + diphosphate. Catalyzes the attachment of proline to tRNA(Pro) in a two-step reaction: proline is first activated by ATP to form Pro-AMP and then transferred to the acceptor end of tRNA(Pro). As ProRS can inadvertently accommodate and process non-cognate amino acids such as alanine and cysteine, to avoid such errors it has two additional distinct editing activities against alanine. One activity is designated as 'pretransfer' editing and involves the tRNA(Pro)-independent hydrolysis of activated Ala-AMP. The other activity is designated 'posttransfer' editing and involves deacylation of mischarged Ala-tRNA(Pro). The misacylated Cys-tRNA(Pro) is not edited by ProRS. The chain is Proline--tRNA ligase from Leptospira biflexa serovar Patoc (strain Patoc 1 / Ames).